Consider the following 557-residue polypeptide: 2-succinyl-5-enolpyruvyl-6-hydroxy-3-cyclohexene-1-carboxylate synthase (557 aa).

Belongs to the TPP enzyme family. MenD subfamily. In terms of assembly, homodimer. Mg(2+) serves as cofactor. Mn(2+) is required as a cofactor. It depends on thiamine diphosphate as a cofactor.

It catalyses the reaction isochorismate + 2-oxoglutarate + H(+) = 5-enolpyruvoyl-6-hydroxy-2-succinyl-cyclohex-3-ene-1-carboxylate + CO2. Its pathway is quinol/quinone metabolism; 1,4-dihydroxy-2-naphthoate biosynthesis; 1,4-dihydroxy-2-naphthoate from chorismate: step 2/7. It functions in the pathway quinol/quinone metabolism; menaquinone biosynthesis. Catalyzes the thiamine diphosphate-dependent decarboxylation of 2-oxoglutarate and the subsequent addition of the resulting succinic semialdehyde-thiamine pyrophosphate anion to isochorismate to yield 2-succinyl-5-enolpyruvyl-6-hydroxy-3-cyclohexene-1-carboxylate (SEPHCHC). The sequence is that of 2-succinyl-5-enolpyruvyl-6-hydroxy-3-cyclohexene-1-carboxylate synthase from Phocaeicola vulgatus (strain ATCC 8482 / DSM 1447 / JCM 5826 / CCUG 4940 / NBRC 14291 / NCTC 11154) (Bacteroides vulgatus).